The following is a 757-amino-acid chain: MSESTYPSVKDLTLEEKASLTSGGDAWHLQGVESKGIPSYMITDGPHGLRKSLASSAGETDLDDSVPATCFPPAAGLSSSWNPELIHKVGEAMAEECIQEKVAVILGPGVNIKRNPLGGRCFEYWSEDPYLAGHEAIGIVEGVQSKGVGTSLKHFAANNQETDRLRVDARISPRALREIYFPAFEHIVKKAQPWTIMCSYNRINGVHSAQNHWLLTDVLRDEWGFDGIVMSDWGADHDRGASLNAGLNLEMPPSYTDDQIVYAVRDGLITPAQLDRMAQGMIDLVNKTRAAMSIDNYRFDVDAHDEVAHQAAIESIVMLKNDDAILPLNAGPVANPSATPQKIAVIGEFARTPRYQGGGSSHITPTKMTSFLDTLAERGIKADFAPGFTLDLEPADPALESEAVETAKNADVVLMFLGLPEAVESEGFDRDTLDMPAKQIALLEQVAAANQNVVVVLSNGSVITVAPWAKNAKGILESWLLGQSGGPALADVIFGQVSPSGKLAQSIPLDINDDPSMLNWPGEEGHVDYGEGVFAGYRYYDTYGKAVDYPFGYGLSYATFEITGVAVAKTGANTATVTATVTNTSDVDAAETVQVYVVPGKADVARPKHELKGFTKAFLKAGESKTVAIDLDERAFAYWSEKYNDWHVEAGEYAIEVGVSSRDIADTVAVALDGDGKTQPLTEWSTYGEWEADPFGAKIVAAVAAAGEAGELTKLPDNAMMRMFLNPMPINSLPTLLGEGGKKIAQFMLDEYAKLSK.

Aspartate 232 is an active-site residue.

This sequence belongs to the glycosyl hydrolase 3 family. Homotetramer.

Its activity is regulated as follows. Completely inhibited by Cu(2+) and activated by Co(2+). Its function is as follows. Catalyzes the hydrolysis of a non-reducing terminal alpha-L-arabinopyranosidic linkage in ginsenoside Rb2 (alpha-L-arabinopyranosyl-(1-&gt;6)-alpha-D-glucopyranosyl) to release alpha-D-glucopyranosyl (Rd). It is not able to hydrolyze alpha-L-arabinofuranosyl-(1-&gt;6)-alpha-D-glucopyranosyl (Rc). This Bifidobacterium longum protein is Exo-alpha-(1-&gt;6)-L-arabinopyranosidase (apy).